We begin with the raw amino-acid sequence, 362 residues long: Oxygen-dependent coproporphyrinogen-III oxidase (362 aa).

Substrate is bound at residue serine 118. A divalent metal cation-binding residues include histidine 122 and histidine 132. Histidine 132 acts as the Proton donor in catalysis. Residue 134–136 coordinates substrate; the sequence is NYR. The a divalent metal cation site is built by histidine 166 and histidine 196. Residues 286–321 form an important for dimerization region; sequence YVEFNLVWDRGTIFGLQTNGRTESILMSLPPLVRWE.

It belongs to the aerobic coproporphyrinogen-III oxidase family. As to quaternary structure, homodimer. It depends on a divalent metal cation as a cofactor.

It localises to the cytoplasm. The enzyme catalyses coproporphyrinogen III + O2 + 2 H(+) = protoporphyrinogen IX + 2 CO2 + 2 H2O. It participates in porphyrin-containing compound metabolism; protoporphyrin-IX biosynthesis; protoporphyrinogen-IX from coproporphyrinogen-III (O2 route): step 1/1. Involved in the heme and chlorophyll biosynthesis. Catalyzes the aerobic oxidative decarboxylation of propionate groups of rings A and B of coproporphyrinogen-III to yield the vinyl groups in protoporphyrinogen-IX. This chain is Oxygen-dependent coproporphyrinogen-III oxidase, found in Synechococcus sp. (strain CC9605).